A 185-amino-acid polypeptide reads, in one-letter code: TATA-box-binding protein 2 (185 aa).

2 repeat units span residues 7 to 84 (IENI…ANEL) and 100 to 178 (VQNV…KTQL).

Belongs to the TBP family.

General factor that plays a role in the activation of archaeal genes transcribed by RNA polymerase. Binds specifically to the TATA box promoter element which lies close to the position of transcription initiation. This chain is TATA-box-binding protein 2, found in Methanosarcina acetivorans (strain ATCC 35395 / DSM 2834 / JCM 12185 / C2A).